The chain runs to 315 residues: Large ribosomal subunit protein uL10 (315 aa).

A compositionally biased stretch (low complexity) spans A285–P294. The interval A285–D315 is disordered. Residues E300–M309 show a composition bias toward acidic residues.

It belongs to the universal ribosomal protein uL10 family. P0 forms a pentameric complex by interaction with dimers of P1 and P2. Post-translationally, phosphorylated.

Ribosomal protein P0 is the functional equivalent of E.coli protein L10. The protein is Large ribosomal subunit protein uL10 (RPLP0) of Lithobates sylvaticus (Wood frog).